The primary structure comprises 207 residues: Large ribosomal subunit protein uL18 (207 aa).

The protein belongs to the universal ribosomal protein uL18 family. In terms of assembly, part of the 50S ribosomal subunit. Contacts the 5S and 23S rRNAs.

In terms of biological role, this is one of the proteins that bind and probably mediate the attachment of the 5S RNA into the large ribosomal subunit, where it forms part of the central protuberance. The chain is Large ribosomal subunit protein uL18 from Caldivirga maquilingensis (strain ATCC 700844 / DSM 13496 / JCM 10307 / IC-167).